Here is a 360-residue protein sequence, read N- to C-terminus: Serine/threonine-protein phosphatase 2A activator 2 (360 aa).

The protein belongs to the PTPA-type PPIase family.

The protein localises to the cytoplasm. The catalysed reaction is [protein]-peptidylproline (omega=180) = [protein]-peptidylproline (omega=0). Its function is as follows. PPIases accelerate the folding of proteins. It catalyzes the cis-trans isomerization of proline imidic peptide bonds in oligopeptides. Acts as a regulatory subunit for PP2A-like phosphatases modulating their activity or substrate specificity, probably by inducing a conformational change in the catalytic subunit, a direct target of the PPIase. Can reactivate inactive phosphatase PP2A-phosphatase methylesterase complexes (PP2Ai) in presence of ATP and Mg(2+) by dissociating the inactive form from the complex. The protein is Serine/threonine-protein phosphatase 2A activator 2 (RRD2) of Kluyveromyces lactis (strain ATCC 8585 / CBS 2359 / DSM 70799 / NBRC 1267 / NRRL Y-1140 / WM37) (Yeast).